A 382-amino-acid chain; its full sequence is Mannitol-1-phosphate 5-dehydrogenase (382 aa).

Ala-4–Gly-15 is a binding site for NAD(+).

Belongs to the mannitol dehydrogenase family.

It carries out the reaction D-mannitol 1-phosphate + NAD(+) = beta-D-fructose 6-phosphate + NADH + H(+). This is Mannitol-1-phosphate 5-dehydrogenase from Vibrio vulnificus (strain CMCP6).